A 603-amino-acid chain; its full sequence is MSTISINHVGLLRNPLHGKSKRASINKSWSLCLPRSSSASRLVKPCRVSSKTDTKPAEMTRRSGNYEPSLWDFDFIQSLDNHHPHVKEKQLKREEELIVEVKMLLGTKIEAVKQLELIDDLKNLGLSYFFRDEIKMVLTSIYNNFFENKNNQVGDLYFTALGFRLLRQHGFNVSQEIFDCFKNEKGSDFDETLIGEDTKATLQLYEASFHLREGENTLELARQISTKYLQKKVDEGSINDENLSSWIRHSLDLPLHWRIQRLEARWFLDAYAAREDKNPLIFELTKLDFNIIQATQQEELKEVSRWWNNSRLAEKLPFVRDRVVECYFWAVGLFDGHDYGFQRKVNAAVNILITAIDDVYDVYGTLDELRLFTDVIRRWDTQSIDQLPYYMQLCYLTLYNYVSDLAYNILKDRGINTIPHLHQSWVNTVEAYLKEAEWYESGYAPSLEEYLSIASISIGVIPIVIPLEVSIPNSTFHRRSPFEYHRYDILHLSAMVLRLADDLGTAQYEVETGDVPKAVQCYIKDTNASEEEAREHVRFMIGEVWKELNTAMAESDDCPFTEQGAWAAVNIGRAAQFIYLEGDGHGRFQIHQHMENLFFHPCV.

The transit peptide at 1–47 (MSTISINHVGLLRNPLHGKSKRASINKSWSLCLPRSSSASRLVKPCR) directs the protein to the chloroplast. Mn(2+) is bound by residues Asp357 and Asp361. The DDXXD motif signature appears at 357–361 (DDVYD). Homodimerization stretches follow at residues 363–369 (YGTLDEL) and 435–472 (EAEW…VSIP). Mn(2+) contacts are provided by Asp501 and Glu509.

This sequence belongs to the terpene synthase family. In terms of assembly, homodimer. Requires Mn(2+) as cofactor. Mg(2+) serves as cofactor.

It is found in the plastid. The protein resides in the chloroplast. It catalyses the reaction (2E)-geranyl diphosphate + H2O = sabinene hydrate + diphosphate. The protein operates within secondary metabolite biosynthesis; terpenoid biosynthesis. In terms of biological role, involved in the biosynthesis of phenolic monoterpenes natural products. Monoterpene synthase which catalyzes the conversion of geranyl diphosphate (GPP) to sabinene hydrate, mainly (Z)-sabinene hydrate and to a lower extent (E)-sabinene hydrate, and the formation of minor amounts and traces of several other monoterpenes (e.g. mainly alpha-thujene, alpha-pinene and myrcene). This chain is Sabinene hydrate synthase, chloroplastic, found in Thymus vulgaris (Thyme).